A 314-amino-acid chain; its full sequence is 2,3-dihydroxyphenylpropionate/2,3-dihydroxicinnamic acid 1,2-dioxygenase (314 aa).

Histidine 115 (proton donor) is an active-site residue. Histidine 179 (proton acceptor) is an active-site residue.

Belongs to the LigB/MhpB extradiol dioxygenase family. Homotetramer. Fe(2+) serves as cofactor.

The enzyme catalyses 3-(2,3-dihydroxyphenyl)propanoate + O2 = (2Z,4E)-2-hydroxy-6-oxonona-2,4-dienedioate + H(+). It catalyses the reaction (2E)-3-(2,3-dihydroxyphenyl)prop-2-enoate + O2 = (2Z,4E,7E)-2-hydroxy-6-oxonona-2,4,7-trienedioate + H(+). It participates in aromatic compound metabolism; 3-phenylpropanoate degradation. Its function is as follows. Catalyzes the non-heme iron(II)-dependent oxidative cleavage of 2,3-dihydroxyphenylpropionic acid and 2,3-dihydroxicinnamic acid into 2-hydroxy-6-ketononadienedioate and 2-hydroxy-6-ketononatrienedioate, respectively. The sequence is that of 2,3-dihydroxyphenylpropionate/2,3-dihydroxicinnamic acid 1,2-dioxygenase from Klebsiella pneumoniae (strain 342).